The primary structure comprises 270 residues: Molybdenum-pterin-binding protein MopB (270 aa).

2 consecutive Mop domains span residues 131–197 and 203–269; these read RTSA…LLAG and RLSV…ILAL.

This sequence belongs to the ModE family.

In Rhodobacter capsulatus (Rhodopseudomonas capsulata), this protein is Molybdenum-pterin-binding protein MopB (mopB).